The sequence spans 383 residues: Succinyl-diaminopimelate desuccinylase (383 aa).

H69 serves as a coordination point for Zn(2+). D71 is a catalytic residue. D103 contacts Zn(2+). Catalysis depends on E137, which acts as the Proton acceptor. Residues E138, E166, and H357 each coordinate Zn(2+).

It belongs to the peptidase M20A family. DapE subfamily. In terms of assembly, homodimer. Zn(2+) serves as cofactor. Requires Co(2+) as cofactor.

It carries out the reaction N-succinyl-(2S,6S)-2,6-diaminopimelate + H2O = (2S,6S)-2,6-diaminopimelate + succinate. It functions in the pathway amino-acid biosynthesis; L-lysine biosynthesis via DAP pathway; LL-2,6-diaminopimelate from (S)-tetrahydrodipicolinate (succinylase route): step 3/3. Its function is as follows. Catalyzes the hydrolysis of N-succinyl-L,L-diaminopimelic acid (SDAP), forming succinate and LL-2,6-diaminopimelate (DAP), an intermediate involved in the bacterial biosynthesis of lysine and meso-diaminopimelic acid, an essential component of bacterial cell walls. This is Succinyl-diaminopimelate desuccinylase from Rickettsia typhi (strain ATCC VR-144 / Wilmington).